Reading from the N-terminus, the 351-residue chain is 1-aminocyclopropane-1-carboxylate oxidase homolog 4 (351 aa).

The 105-residue stretch at 200–304 (KSQYMVGQHY…AIVFSTFMRA (105 aa)) folds into the Fe2OG dioxygenase domain. Positions 224, 226, and 280 each coordinate Fe cation. R291 lines the 2-oxoglutarate pocket.

This sequence belongs to the iron/ascorbate-dependent oxidoreductase family. Fe(2+) serves as cofactor.

The polypeptide is 1-aminocyclopropane-1-carboxylate oxidase homolog 4 (Arabidopsis thaliana (Mouse-ear cress)).